The chain runs to 362 residues: Phenylalanine--tRNA ligase alpha subunit (362 aa).

Glu263 serves as a coordination point for Mg(2+).

The protein belongs to the class-II aminoacyl-tRNA synthetase family. Phe-tRNA synthetase alpha subunit type 1 subfamily. Tetramer of two alpha and two beta subunits. It depends on Mg(2+) as a cofactor.

Its subcellular location is the cytoplasm. The catalysed reaction is tRNA(Phe) + L-phenylalanine + ATP = L-phenylalanyl-tRNA(Phe) + AMP + diphosphate + H(+). The polypeptide is Phenylalanine--tRNA ligase alpha subunit (Caulobacter sp. (strain K31)).